Reading from the N-terminus, the 33-residue chain is Cytochrome b6-f complex subunit 8 (33 aa).

Residues 2–22 traverse the membrane as a helical segment; that stretch reads LITLGWASLAALFSFSIAMVV.

It belongs to the PetN family. In terms of assembly, the 4 large subunits of the cytochrome b6-f complex are cytochrome b6, subunit IV (17 kDa polypeptide, PetD), cytochrome f and the Rieske protein, while the 4 small subunits are PetG, PetL, PetM and PetN. The complex functions as a dimer.

The protein localises to the plastid. It localises to the organellar chromatophore thylakoid membrane. Component of the cytochrome b6-f complex, which mediates electron transfer between photosystem II (PSII) and photosystem I (PSI), cyclic electron flow around PSI, and state transitions. In Paulinella chromatophora, this protein is Cytochrome b6-f complex subunit 8.